We begin with the raw amino-acid sequence, 700 residues long: Pentatricopeptide repeat-containing protein 1, mitochondrial (700 aa).

The disordered stretch occupies residues S49–S93. Polar residues predominate over residues N62–T78. The segment covering Q79–S88 has biased composition (acidic residues). 6 PPR repeats span residues T135–P171, M172–P206, S207–L245, N246–V280, T281–P317, and S318–L354. The segment at S393–V414 is disordered. PPR repeat units follow at residues D519–P553, N554–P585, and N586–V620. A disordered region spans residues H672–R700. The segment covering P681 to D692 has biased composition (basic and acidic residues).

This sequence belongs to the PTCD1 family. In terms of assembly, associates with mitochondrial leucine tRNAs. Interacts with ELAC2. In terms of tissue distribution, abundant in testes, skeletal muscle and heart.

It localises to the mitochondrion. It is found in the mitochondrion matrix. Mitochondrial protein implicated in negative regulation of leucine tRNA levels, as well as negative regulation of mitochondria-encoded proteins and COX activity. Also affects the 3'-processing of mitochondrial tRNAs. The chain is Pentatricopeptide repeat-containing protein 1, mitochondrial (PTCD1) from Homo sapiens (Human).